The chain runs to 107 residues: MAGEDVGAPPDHLWVHQEGIYRDEYQRTWVAVVEEETSFLRARVQQIQVPLGDAARPSHLLTSQLPLMWQLYPEERYMDNNSRLWQIQHHLMVRGVQELLLKLLPDD.

The protein belongs to the TCL1 family. As to quaternary structure, interacts with AKT1 and AKT2 (via PH domain). Does not interact with AKT3. In terms of tissue distribution, not found at a significant level in any tissue.

In terms of biological role, enhances the phosphorylation and activation of AKT1 and AKT2. The polypeptide is Protein p13 MTCP-1 (MTCP1) (Homo sapiens (Human)).